The chain runs to 639 residues: mRNA export factor (639 aa).

3 disordered regions span residues 1 to 45, 63 to 287, and 322 to 355; these read MQAE…SLES, LLGD…KWGA, and CTAR…SQPR. Basic residues predominate over residues 142–152; it reads PRRRTHARSRS. Positions 153–169 are enriched in low complexity; the sequence is PRAGSTSSQQPPSSSGG. The segment covering 175–189 has biased composition (basic and acidic residues); it reads VRREAGDRETSEKPA. Residues 203–215 show a composition bias toward polar residues; it reads HQCQSPPAQTASQ. Composition is skewed to basic and acidic residues over residues 234 to 247 and 326 to 348; these read RTPH…HEGA and DPAR…ERRT. The Zn(2+) site is built by Cys-525, His-606, Cys-610, and Cys-615. A CHC2-type zinc finger spans residues 525–615; the sequence is CHLAASKSPL…HANVCRKEEC (91 aa).

The protein belongs to the HHV-1 ICP27 protein family.

The protein resides in the host cytoplasm. Its subcellular location is the host nucleus. In terms of biological role, multifunctional regulator of the expression of viral genes that mediates nuclear export of viral intronless mRNAs. This immediate early (EI) protein promotes the nuclear export of viral intronless mRNAs. The protein is mRNA export factor of Amazona oratrix (yellow-headed parrot).